The chain runs to 48 residues: Cytochrome c oxidase subunit 2 (48 aa).

Over 1 to 14 the chain is Mitochondrial intermembrane; it reads MAHPAQLGLQDASS. Residues 15-45 form a helical membrane-spanning segment; the sequence is PIXEELLHFHEDALMIVFLISTLVLYIITTT. Over 46-48 the chain is Mitochondrial matrix; the sequence is VST.

This sequence belongs to the cytochrome c oxidase subunit 2 family. Component of the cytochrome c oxidase (complex IV, CIV), a multisubunit enzyme composed of 14 subunits. The complex is composed of a catalytic core of 3 subunits MT-CO1, MT-CO2 and MT-CO3, encoded in the mitochondrial DNA, and 11 supernumerary subunits COX4I, COX5A, COX5B, COX6A, COX6B, COX6C, COX7A, COX7B, COX7C, COX8 and NDUFA4, which are encoded in the nuclear genome. The complex exists as a monomer or a dimer and forms supercomplexes (SCs) in the inner mitochondrial membrane with NADH-ubiquinone oxidoreductase (complex I, CI) and ubiquinol-cytochrome c oxidoreductase (cytochrome b-c1 complex, complex III, CIII), resulting in different assemblies (supercomplex SCI(1)III(2)IV(1) and megacomplex MCI(2)III(2)IV(2)). Found in a complex with TMEM177, COA6, COX18, COX20, SCO1 and SCO2. Interacts with TMEM177 in a COX20-dependent manner. Interacts with COX20. Interacts with COX16. Requires Cu cation as cofactor.

It localises to the mitochondrion inner membrane. The enzyme catalyses 4 Fe(II)-[cytochrome c] + O2 + 8 H(+)(in) = 4 Fe(III)-[cytochrome c] + 2 H2O + 4 H(+)(out). Component of the cytochrome c oxidase, the last enzyme in the mitochondrial electron transport chain which drives oxidative phosphorylation. The respiratory chain contains 3 multisubunit complexes succinate dehydrogenase (complex II, CII), ubiquinol-cytochrome c oxidoreductase (cytochrome b-c1 complex, complex III, CIII) and cytochrome c oxidase (complex IV, CIV), that cooperate to transfer electrons derived from NADH and succinate to molecular oxygen, creating an electrochemical gradient over the inner membrane that drives transmembrane transport and the ATP synthase. Cytochrome c oxidase is the component of the respiratory chain that catalyzes the reduction of oxygen to water. Electrons originating from reduced cytochrome c in the intermembrane space (IMS) are transferred via the dinuclear copper A center (CU(A)) of subunit 2 and heme A of subunit 1 to the active site in subunit 1, a binuclear center (BNC) formed by heme A3 and copper B (CU(B)). The BNC reduces molecular oxygen to 2 water molecules using 4 electrons from cytochrome c in the IMS and 4 protons from the mitochondrial matrix. The chain is Cytochrome c oxidase subunit 2 (mt-co2) from Polypterus sp. (Bichir).